Reading from the N-terminus, the 346-residue chain is Short-wave-sensitive opsin 1 (346 aa).

Over 1-31 the chain is Extracellular; the sequence is MSGEDDFYLFQNISSVGPWDGPQYHLAPVWA. Residue Asn12 is glycosylated (N-linked (GlcNAc...) asparagine). A helical transmembrane segment spans residues 32 to 56; sequence FRLQAAFMGFVFFVGTPLNAIVLVA. The Cytoplasmic segment spans residues 57 to 68; sequence TLHYKKLRQPLN. A helical membrane pass occupies residues 69–94; the sequence is YILVNVSLGGFLFCIFSVFTVFIASC. Over 95-108 the chain is Extracellular; sequence HGYFLFGRHVCALE. A disulfide bond links Cys105 and Cys182. The chain crosses the membrane as a helical span at residues 109-128; it reads AFLGSVAGLVTGWSLAFLAF. Over 129–147 the chain is Cytoplasmic; the sequence is ERYVVICKPFGSIRFNSKH. Residues 148 to 171 form a helical membrane-spanning segment; sequence ALMVVLATWIIGIGVSIPPFFGWS. The Extracellular segment spans residues 172–197; sequence RFIPEGLQCSCGPDWYTVGTKYRSEY. The chain crosses the membrane as a helical span at residues 198–225; sequence YTWFLFIFCFIIPLSLICFSYSQLLRTL. Residues 226-247 are Cytoplasmic-facing; it reads RAVAAQQQESATTQKAEREVSH. Residues 248-271 traverse the membrane as a helical segment; that stretch reads MVVVMVGSFCLCYVPYAALAMYMV. The Extracellular segment spans residues 272-279; it reads NNRNHGLD. Residues 280–304 form a helical membrane-spanning segment; the sequence is LRLVTIPAFFSKSSCVYNPIIYCFM. At Lys291 the chain carries N6-(retinylidene)lysine. Residues 305–346 lie on the Cytoplasmic side of the membrane; that stretch reads NKQFRACILEMVCRKPMADESDVSGSQKTEVSTVSSSKVGPH. The disordered stretch occupies residues 324–346; sequence ESDVSGSQKTEVSTVSSSKVGPH. Residues 330-346 are compositionally biased toward low complexity; that stretch reads SQKTEVSTVSSSKVGPH.

It belongs to the G-protein coupled receptor 1 family. Opsin subfamily. Post-translationally, phosphorylated on some or all of the serine and threonine residues present in the C-terminal region. In terms of tissue distribution, expressed in the inner and outer segments of cone photoreceptor cells in the retina (at protein level).

Its subcellular location is the cell membrane. The protein localises to the photoreceptor inner segment. It is found in the cell projection. It localises to the cilium. The protein resides in the photoreceptor outer segment. Its subcellular location is the cytoplasm. The protein localises to the perinuclear region. In terms of biological role, visual pigments are the light-absorbing molecules that mediate vision. They consist of an apoprotein, opsin, covalently linked to cis-retinal. Required for the maintenance of cone outer segment organization in the ventral retina, but not essential for the maintenance of functioning cone photoreceptors. Involved in ensuring correct abundance and localization of retinal membrane proteins. May increase spectral sensitivity in dim light. In Mus musculus (Mouse), this protein is Short-wave-sensitive opsin 1 (Opn1sw).